A 669-amino-acid chain; its full sequence is MNIIKRAGVFIGLVYFTVLLIIYGEHIVRSYATEDCMPAGLYYYAEGAAYTNLPVCKDEPKSSYKGTELFPTSPNIDKPLRMTTDIMVHPISSTSDLGPMDVPPDMYPMYSCPNLSNSSPLPLWYGSCINSCQITSSKETMAVTVWAINSTVDIIMGYKLTTFFETKFSHVGPFGGCSISLVGSEPRSAPEALISGWRSKILSQGNIQDAAWYLYNDPECNYFSDIYSSGFFVRIDRIKLTVLIDAVGNLYLSDLVAGSYDSYDKGFATHGNNVWIWDTDRVKVDNNCYFKQTDDTYCDYDNTTGYILCKTIGVSFRSELQTRVESPCAGHLNISTDGVIYRLEGTADTPSTQDRLSSILKNNVNLGMESLISLINDVFTNIESSYCTGMCDLMEVILSNYPTATTVLETPIGPWLPITTNGHTVMTACSSDPNWVIKTPVSYCYSKKMIKVVNKDTMREAWWRIVNSYIILNETCTDENTTSFNLVKERMELRQDITYSFWRGDLIVSYPYNKSRWITYKDEKIQRSSKWFDKLLPLRYNHPITLDNITMELINHTRDIYDVHVYPSQGSTSKRPMSDVIGRVGAAGSNLIKHLVKGIGETFFWVTQHIELICDILIIIVCVVIGYCVVLKPILYITMRGREKQQPVIVMRDEGRSHLFSRSTATNAL.

The first 24 residues, 1–24, serve as a signal peptide directing secretion; it reads MNIIKRAGVFIGLVYFTVLLIIYG. At 25–609 the chain is on the virion surface side; the sequence is EHIVRSYATE…GETFFWVTQH (585 aa). The helical transmembrane segment at 610 to 630 threads the bilayer; it reads IELICDILIIIVCVVIGYCVV. Over 631–669 the chain is Intravirion; sequence LKPILYITMRGREKQQPVIVMRDEGRSHLFSRSTATNAL.

It belongs to the nucleorhabdovirus glycoprotein family. Homotrimer. Interacts with matrix protein. Glycosylated by host. Glycosylation is crucial for glycoprotein export at the cell surface.

Its subcellular location is the virion membrane. Its function is as follows. Attaches the virus to host cellular receptor, inducing endocytosis of the virion. In the endosome, the acidic pH induces conformational changes in the glycoprotein trimer, which trigger fusion between virus and cell membrane. This Oryza sativa (Rice) protein is Glycoprotein (G).